We begin with the raw amino-acid sequence, 82 residues long: Translation initiation factor IF-1, chloroplastic (82 aa).

Residues 1-72 (MNKQNLIDVE…TKGRIIYRLR (72 aa)) form the S1-like domain.

The protein belongs to the IF-1 family. Component of the 30S ribosomal translation pre-initiation complex which assembles on the 30S ribosome in the order IF-2 and IF-3, IF-1 and N-formylmethionyl-tRNA(fMet); mRNA recruitment can occur at any time during PIC assembly.

Its subcellular location is the plastid. The protein resides in the chloroplast. Its function is as follows. One of the essential components for the initiation of protein synthesis. Stabilizes the binding of IF-2 and IF-3 on the 30S subunit to which N-formylmethionyl-tRNA(fMet) subsequently binds. Helps modulate mRNA selection, yielding the 30S pre-initiation complex (PIC). Upon addition of the 50S ribosomal subunit IF-1, IF-2 and IF-3 are released leaving the mature 70S translation initiation complex. The protein is Translation initiation factor IF-1, chloroplastic of Cycas taitungensis (Prince sago).